A 275-amino-acid chain; its full sequence is NH(3)-dependent NAD(+) synthetase (275 aa).

50–57 (GISGGVDS) lines the ATP pocket. Residue aspartate 56 coordinates Mg(2+). Deamido-NAD(+) is bound at residue arginine 147. Threonine 167 provides a ligand contact to ATP. Glutamate 172 serves as a coordination point for Mg(2+). Residues lysine 180 and aspartate 187 each coordinate deamido-NAD(+). The ATP site is built by lysine 196 and threonine 218. 267–268 (HK) provides a ligand contact to deamido-NAD(+).

The protein belongs to the NAD synthetase family. Homodimer.

It catalyses the reaction deamido-NAD(+) + NH4(+) + ATP = AMP + diphosphate + NAD(+) + H(+). The protein operates within cofactor biosynthesis; NAD(+) biosynthesis; NAD(+) from deamido-NAD(+) (ammonia route): step 1/1. Catalyzes the ATP-dependent amidation of deamido-NAD to form NAD. Uses ammonia as a nitrogen source. The sequence is that of NH(3)-dependent NAD(+) synthetase from Pseudomonas aeruginosa (strain LESB58).